The sequence spans 278 residues: 3-methyl-2-oxobutanoate hydroxymethyltransferase (278 aa).

Residues Asp-43 and Asp-82 each contribute to the Mg(2+) site. 3-methyl-2-oxobutanoate-binding positions include 43-44 (DS), Asp-82, and Lys-112. Glu-114 contributes to the Mg(2+) binding site. The active-site Proton acceptor is Glu-181.

Belongs to the PanB family. As to quaternary structure, homodecamer; pentamer of dimers. Mg(2+) is required as a cofactor.

The protein resides in the cytoplasm. The enzyme catalyses 3-methyl-2-oxobutanoate + (6R)-5,10-methylene-5,6,7,8-tetrahydrofolate + H2O = 2-dehydropantoate + (6S)-5,6,7,8-tetrahydrofolate. It functions in the pathway cofactor biosynthesis; (R)-pantothenate biosynthesis; (R)-pantoate from 3-methyl-2-oxobutanoate: step 1/2. Catalyzes the reversible reaction in which hydroxymethyl group from 5,10-methylenetetrahydrofolate is transferred onto alpha-ketoisovalerate to form ketopantoate. The sequence is that of 3-methyl-2-oxobutanoate hydroxymethyltransferase from Bacillus cereus (strain ATCC 14579 / DSM 31 / CCUG 7414 / JCM 2152 / NBRC 15305 / NCIMB 9373 / NCTC 2599 / NRRL B-3711).